The chain runs to 529 residues: Bifunctional purine biosynthesis protein PurH (529 aa).

The region spanning 1–148 (MQQRRPVRRA…KNHKDVAIVV (148 aa)) is the MGS-like domain.

The protein belongs to the PurH family.

It carries out the reaction (6R)-10-formyltetrahydrofolate + 5-amino-1-(5-phospho-beta-D-ribosyl)imidazole-4-carboxamide = 5-formamido-1-(5-phospho-D-ribosyl)imidazole-4-carboxamide + (6S)-5,6,7,8-tetrahydrofolate. It catalyses the reaction IMP + H2O = 5-formamido-1-(5-phospho-D-ribosyl)imidazole-4-carboxamide. It participates in purine metabolism; IMP biosynthesis via de novo pathway; 5-formamido-1-(5-phospho-D-ribosyl)imidazole-4-carboxamide from 5-amino-1-(5-phospho-D-ribosyl)imidazole-4-carboxamide (10-formyl THF route): step 1/1. The protein operates within purine metabolism; IMP biosynthesis via de novo pathway; IMP from 5-formamido-1-(5-phospho-D-ribosyl)imidazole-4-carboxamide: step 1/1. The chain is Bifunctional purine biosynthesis protein PurH from Salmonella heidelberg (strain SL476).